Reading from the N-terminus, the 379-residue chain is Programmed cell death protein 2-like (379 aa).

In Gallus gallus (Chicken), this protein is Programmed cell death protein 2-like (PDCD2L).